Here is a 225-residue protein sequence, read N- to C-terminus: 3-dehydroquinate dehydratase (225 aa).

3-dehydroquinate-binding positions include 30-32 (EWR) and Arg62. Catalysis depends on His118, which acts as the Proton donor/acceptor. Catalysis depends on Lys143, which acts as the Schiff-base intermediate with substrate. 3-dehydroquinate is bound by residues Arg186, Ser205, and Gln209.

This sequence belongs to the type-I 3-dehydroquinase family. As to quaternary structure, homodimer.

It catalyses the reaction 3-dehydroquinate = 3-dehydroshikimate + H2O. It functions in the pathway metabolic intermediate biosynthesis; chorismate biosynthesis; chorismate from D-erythrose 4-phosphate and phosphoenolpyruvate: step 3/7. Functionally, involved in the third step of the chorismate pathway, which leads to the biosynthesis of aromatic amino acids. Catalyzes the cis-dehydration of 3-dehydroquinate (DHQ) and introduces the first double bond of the aromatic ring to yield 3-dehydroshikimate. The sequence is that of 3-dehydroquinate dehydratase from Streptococcus thermophilus (strain ATCC BAA-491 / LMD-9).